The primary structure comprises 274 residues: Bis(5'-nucleosyl)-tetraphosphatase, symmetrical (274 aa).

It belongs to the Ap4A hydrolase family.

It carries out the reaction P(1),P(4)-bis(5'-adenosyl) tetraphosphate + H2O = 2 ADP + 2 H(+). Its function is as follows. Hydrolyzes diadenosine 5',5'''-P1,P4-tetraphosphate to yield ADP. This is Bis(5'-nucleosyl)-tetraphosphatase, symmetrical from Shewanella putrefaciens (strain CN-32 / ATCC BAA-453).